Consider the following 222-residue polypeptide: Small ribosomal subunit protein eS1 (222 aa).

The protein belongs to the eukaryotic ribosomal protein eS1 family.

The sequence is that of Small ribosomal subunit protein eS1 from Pyrobaculum neutrophilum (strain DSM 2338 / JCM 9278 / NBRC 100436 / V24Sta) (Thermoproteus neutrophilus).